We begin with the raw amino-acid sequence, 302 residues long: uncharacterized protein (302 aa).

The N-terminal stretch at 1 to 28 (MNKLTAQNLLKKSRFLKYSLLTSISVGA) is a signal peptide.

This is an uncharacterized protein from Rickettsia prowazekii (strain Madrid E).